Reading from the N-terminus, the 40-residue chain is Large ribosomal subunit protein bL36 (40 aa).

The protein belongs to the bacterial ribosomal protein bL36 family.

The sequence is that of Large ribosomal subunit protein bL36 from Corynebacterium urealyticum (strain ATCC 43042 / DSM 7109).